A 688-amino-acid polypeptide reads, in one-letter code: PTS system glucoside-specific EIICBA component (688 aa).

The PTS EIIC type-1 domain occupies 3 to 427; that stretch reads KKLFGQLQRI…FKLKTPGRED (425 aa). 10 helical membrane-spanning segments follow: residues 12–32, 81–101, 137–157, 182–202, 223–243, 284–304, 315–335, 340–360, 364–384, and 395–415; these read IGKA…LLAF, LGLA…YLIM, LVLG…MGAL, FVPI…SFAW, LTTF…LHHI, AFTT…AFAI, IVGG…ITEP, FLFV…TSFL, LLGV…ILYG, and LVIP…DFAI. The region spanning 438–519 is the PTS EIIB type-1 domain; sequence AKLPFDVLDA…AKIMSGEITK (82 aa). The active-site Phosphocysteine intermediate; for EIIB activity is the C460. The region spanning 560 to 664 is the PTS EIIA type-1 domain; that stretch reads DQVFAGKMMG…SIVTPMIITN (105 aa). The active-site Tele-phosphohistidine intermediate; for EIIA activity is the H612.

It is found in the cell membrane. Its function is as follows. The phosphoenolpyruvate-dependent sugar phosphotransferase system (sugar PTS), a major carbohydrate active -transport system, catalyzes the phosphorylation of incoming sugar substrates concomitantly with their translocation across the cell membrane. This system is involved in alpha- and beta-glucoside transport. The sequence is that of PTS system glucoside-specific EIICBA component (glcB) from Staphylococcus aureus (strain MRSA252).